The primary structure comprises 122 residues: Large ribosomal subunit protein uL14 (122 aa).

It belongs to the universal ribosomal protein uL14 family. Part of the 50S ribosomal subunit. Forms a cluster with proteins L3 and L19. In the 70S ribosome, L14 and L19 interact and together make contacts with the 16S rRNA in bridges B5 and B8.

Binds to 23S rRNA. Forms part of two intersubunit bridges in the 70S ribosome. The polypeptide is Large ribosomal subunit protein uL14 (Stutzerimonas stutzeri (strain A1501) (Pseudomonas stutzeri)).